Reading from the N-terminus, the 147-residue chain is MNNILVINGPNLNLLGKREPDMYGNITLENINQKIKLHFKNEDLKIDFFQSNEEGKIIDKIIESQKKYNAIVINPAAYSHYSIAILDAMRSINIPAVEVHLSNIYKREEYRKKSVTAEASLGVISGFGYYGYIMAIEFILNNLVREK.

Y23 functions as the Proton acceptor in the catalytic mechanism. Residues N74, H80, and D87 each coordinate substrate. H100 serves as the catalytic Proton donor. Substrate-binding positions include L101–S102 and R111.

This sequence belongs to the type-II 3-dehydroquinase family. Homododecamer.

The catalysed reaction is 3-dehydroquinate = 3-dehydroshikimate + H2O. The protein operates within metabolic intermediate biosynthesis; chorismate biosynthesis; chorismate from D-erythrose 4-phosphate and phosphoenolpyruvate: step 3/7. Its function is as follows. Catalyzes a trans-dehydration via an enolate intermediate. This chain is 3-dehydroquinate dehydratase, found in Clostridium botulinum (strain 657 / Type Ba4).